We begin with the raw amino-acid sequence, 275 residues long: ADP-dependent (S)-NAD(P)H-hydrate dehydratase (275 aa).

One can recognise a YjeF C-terminal domain in the interval 5-273 (TDEILAKVIK…EEIPLFMKKY (269 aa)). (6S)-NADPHX is bound by residues alanine 40, glycine 103, and histidine 151. Glycine 214 lines the AMP pocket. A (6S)-NADPHX-binding site is contributed by aspartate 215.

The protein belongs to the NnrD/CARKD family. As to quaternary structure, homotetramer. Requires Mg(2+) as cofactor.

It carries out the reaction (6S)-NADHX + ADP = AMP + phosphate + NADH + H(+). The catalysed reaction is (6S)-NADPHX + ADP = AMP + phosphate + NADPH + H(+). In terms of biological role, catalyzes the dehydration of the S-form of NAD(P)HX at the expense of ADP, which is converted to AMP. Together with NAD(P)HX epimerase, which catalyzes the epimerization of the S- and R-forms, the enzyme allows the repair of both epimers of NAD(P)HX, a damaged form of NAD(P)H that is a result of enzymatic or heat-dependent hydration. This Lactococcus lactis subsp. lactis (strain IL1403) (Streptococcus lactis) protein is ADP-dependent (S)-NAD(P)H-hydrate dehydratase.